A 389-amino-acid chain; its full sequence is S-adenosylmethionine synthase (389 aa).

H17 lines the ATP pocket. D19 lines the Mg(2+) pocket. E45 contributes to the K(+) binding site. 2 residues coordinate L-methionine: E58 and Q101. The interval 101 to 111 (QSPDISQGVTE) is flexible loop. ATP-binding positions include 168–170 (DSK), 234–235 (RF), D243, 249–250 (RK), A266, and K270. Residue D243 participates in L-methionine binding. K274 contacts L-methionine.

Belongs to the AdoMet synthase family. In terms of assembly, homotetramer; dimer of dimers. Requires Mg(2+) as cofactor. K(+) is required as a cofactor.

It is found in the cytoplasm. It catalyses the reaction L-methionine + ATP + H2O = S-adenosyl-L-methionine + phosphate + diphosphate. Its pathway is amino-acid biosynthesis; S-adenosyl-L-methionine biosynthesis; S-adenosyl-L-methionine from L-methionine: step 1/1. Functionally, catalyzes the formation of S-adenosylmethionine (AdoMet) from methionine and ATP. The overall synthetic reaction is composed of two sequential steps, AdoMet formation and the subsequent tripolyphosphate hydrolysis which occurs prior to release of AdoMet from the enzyme. This Geobacter metallireducens (strain ATCC 53774 / DSM 7210 / GS-15) protein is S-adenosylmethionine synthase.